The sequence spans 82 residues: Delta-conotoxin SVIE (82 aa).

The signal sequence occupies residues 1–22 (MKLTCVMIVAVLFLTTWTFVTA). Residues 23–51 (DDSRYGLKNLFPKARHEMKNPEASKLNKR) constitute a propeptide that is removed on maturation. 3 disulfides stabilise this stretch: Cys-54–Cys-69, Cys-61–Cys-73, and Cys-68–Cys-77. A 4-hydroxyproline modification is found at Pro-65.

This sequence belongs to the conotoxin O1 superfamily. As to expression, expressed by the venom duct.

Its subcellular location is the secreted. In terms of biological role, delta-conotoxins bind to site 6 of voltage-gated sodium channels (Nav) and inhibit the inactivation process. Impairs rapid channel inactivation of Nav1.4/SCN4A (Kd=500 nM). Interacts with a conserved hydrophobic triad (YFV) in the domain-4 voltage sensor of sodium channels. In vivo, injection of both native or synthetic peptide induces twitching of back limbs, running in circles, and spastic paralysis. The sequence is that of Delta-conotoxin SVIE (SO6) from Conus striatus (Striated cone).